Consider the following 245-residue polypeptide: 5-oxoprolinase subunit A (245 aa).

Belongs to the LamB/PxpA family. In terms of assembly, forms a complex composed of PxpA, PxpB and PxpC.

It catalyses the reaction 5-oxo-L-proline + ATP + 2 H2O = L-glutamate + ADP + phosphate + H(+). Functionally, catalyzes the cleavage of 5-oxoproline to form L-glutamate coupled to the hydrolysis of ATP to ADP and inorganic phosphate. The protein is 5-oxoprolinase subunit A of Erwinia tasmaniensis (strain DSM 17950 / CFBP 7177 / CIP 109463 / NCPPB 4357 / Et1/99).